Consider the following 97-residue polypeptide: Class II hydrophobin A (97 aa).

The signal sequence occupies residues 1–15 (MKSVVFASLIASALA). 3 disulfides stabilise this stretch: Cys30/Cys79, Cys40/Cys53, and Cys80/Cys91.

This sequence belongs to the cerato-ulmin hydrophobin family.

The protein resides in the secreted. It localises to the cell wall. Its subcellular location is the vacuole. It is found in the cytoplasmic vesicle. Aerial growth, conidiation, and dispersal of filamentous fungi in the environment rely upon a capability of their secreting small amphipathic proteins called hydrophobins (HPBs) with low sequence identity. Class I can self-assemble into an outermost layer of rodlet bundles on aerial cell surfaces, conferring cellular hydrophobicity that supports fungal growth, development and dispersal; whereas Class II form highly ordered films at water-air interfaces through intermolecular interactions but contribute nothing to the rodlet structure. Hyd2A contributes to certain cell wall-related features, such as hydrophobicity but is not involved in cell wall-related events during fungal proliferation in host hemocoel. Does not contribute to conidial hydrophobicity. Involved in insect hemocoel colonization independent of cell hydrophobicity, as well as in the asexual development. In Beauveria bassiana (strain ARSEF 2860) (White muscardine disease fungus), this protein is Class II hydrophobin A.